A 202-amino-acid chain; its full sequence is dITP/XTP pyrophosphatase (202 aa).

10 to 15 contacts substrate; the sequence is TGNAGK. Mg(2+) contacts are provided by D46 and D75. The Proton acceptor role is filled by D75. Substrate-binding positions include S76, 160 to 163, K183, and 188 to 189; these read FGYD and HR.

It belongs to the HAM1 NTPase family. As to quaternary structure, homodimer. The cofactor is Mg(2+).

It carries out the reaction XTP + H2O = XMP + diphosphate + H(+). The enzyme catalyses dITP + H2O = dIMP + diphosphate + H(+). The catalysed reaction is ITP + H2O = IMP + diphosphate + H(+). Its function is as follows. Pyrophosphatase that catalyzes the hydrolysis of nucleoside triphosphates to their monophosphate derivatives, with a high preference for the non-canonical purine nucleotides XTP (xanthosine triphosphate), dITP (deoxyinosine triphosphate) and ITP. Seems to function as a house-cleaning enzyme that removes non-canonical purine nucleotides from the nucleotide pool, thus preventing their incorporation into DNA/RNA and avoiding chromosomal lesions. The polypeptide is dITP/XTP pyrophosphatase (Idiomarina loihiensis (strain ATCC BAA-735 / DSM 15497 / L2-TR)).